We begin with the raw amino-acid sequence, 459 residues long: Exodeoxyribonuclease 7 large subunit (459 aa).

Belongs to the XseA family. As to quaternary structure, heterooligomer composed of large and small subunits.

The protein resides in the cytoplasm. The catalysed reaction is Exonucleolytic cleavage in either 5'- to 3'- or 3'- to 5'-direction to yield nucleoside 5'-phosphates.. Its function is as follows. Bidirectionally degrades single-stranded DNA into large acid-insoluble oligonucleotides, which are then degraded further into small acid-soluble oligonucleotides. This chain is Exodeoxyribonuclease 7 large subunit, found in Pseudomonas savastanoi pv. phaseolicola (strain 1448A / Race 6) (Pseudomonas syringae pv. phaseolicola (strain 1448A / Race 6)).